Consider the following 399-residue polypeptide: Cytochrome P450 FAS1 (399 aa).

Residue C349 coordinates heme.

The protein belongs to the cytochrome P450 family. Requires heme as cofactor.

The protein localises to the cytoplasm. In terms of biological role, may be involved in the biosynthesis of cytokinin phytohormones and in host plant fasciation (leafy gall). This is Cytochrome P450 FAS1 (fas1) from Rhodococcoides fascians (Rhodococcus fascians).